Consider the following 439-residue polypeptide: MGVANDSSPEYQWMSPHRLSDTVILGDCLYFNNIMSQLDLHQNWAPSVRLLNYFKNFNRETLLKIEENDYINSSFFQQKDKRFYPINDDFYHISTGGYGIVFKIDNYVVKFVFEATKLYSPMETTAEFTVPKFLYNNLKGDEKKLIVCAWAMGLNYKLTFLHTLYKRVLHMLLLLIQTMDGQELSLRYSSKVFLKAFNERKDSIKFVKLLSHFYPAVINSNINVINYFNRMFHFFEHEKRTNYEYERGNIIIFPLALYSADKVDTELAIKLGFKSLVQYIKFIFLQMALLYIKIYELPCCDNFLHADLKPDNILLFDSNEPIIIHLKDKKFVFNERIKSALNDFDFSQVAGIINKKIKNNFKVKHNWYYDFHFFVHTLLKTYPEIEKDIEFSTALEEFIMCTKTDCDKYRLKVSILHPISFLEKFIMRDIFSDWINGGN.

Residues 87 to 439 (NDDFYHISTG…IFSDWINGGN (353 aa)) form the Protein kinase domain. Residues 93–101 (ISTGGYGIV) and Lys-117 contribute to the ATP site. Asp-307 serves as the catalytic Proton acceptor.

This sequence belongs to the protein kinase superfamily. Ser/Thr protein kinase family. Poxviruses subfamily. Post-translationally, phosphorylated in vivo. Autophosphorylated in vitro.

The protein localises to the host endoplasmic reticulum. It is found in the host endoplasmic reticulum-Golgi intermediate compartment. It carries out the reaction L-seryl-[protein] + ATP = O-phospho-L-seryl-[protein] + ADP + H(+). The enzyme catalyses L-threonyl-[protein] + ATP = O-phospho-L-threonyl-[protein] + ADP + H(+). Its function is as follows. Essential serine-protein kinase involved in the early stage of virion morphogenesis. This is Serine/threonine-protein kinase 2 (OPG054) from Vaccinia virus (strain Copenhagen) (VACV).